Here is a 120-residue protein sequence, read N- to C-terminus: U13-lycotoxin-Ls1a (120 aa).

The N-terminal stretch at 1–16 (MKTLFVLISILYAVYC) is a signal peptide. A propeptide spanning residues 17–54 (FSSEEDVDSAYLANELEPVEDINSEQYAALEPKEEQER) is cleaved from the precursor. Cystine bridges form between Cys56–Cys70, Cys63–Cys76, Cys69–Cys87, and Cys78–Cys85. An Agouti domain is found at 56–95 (CADMGQDCKDDCDCCLNIATCNCWFGRYFCSCTFGDYQTC).

It belongs to the neurotoxin 05 (agouti) family. Contains 6 disulfide bonds. Expressed by the venom gland.

The protein localises to the secreted. The polypeptide is U13-lycotoxin-Ls1a (Lycosa singoriensis (Wolf spider)).